A 388-amino-acid chain; its full sequence is Leucine aminopeptidase 1 (388 aa).

The N-terminal stretch at 1–19 is a signal peptide; sequence MRVLAAIALGATGLRGALA. Positions 20–88 are excised as a propeptide; the sequence is AVVPQEVLGT…YPTLNSASYV (69 aa). 2 N-linked (GlcNAc...) asparagine glycosylation sites follow: asparagine 106 and asparagine 180. Zn(2+) contacts are provided by histidine 188 and aspartate 207. Asparagine 232 is a glycosylation site (N-linked (GlcNAc...) asparagine). Zn(2+) contacts are provided by glutamate 246 and aspartate 273. A disulfide bridge links cysteine 322 with cysteine 326. Zn(2+) is bound at residue histidine 355.

It belongs to the peptidase M28 family. M28E subfamily. Monomer. The cofactor is Zn(2+).

It is found in the secreted. Extracellular aminopeptidase that allows assimilation of proteinaceous substrates. The polypeptide is Leucine aminopeptidase 1 (lap1) (Aspergillus clavatus (strain ATCC 1007 / CBS 513.65 / DSM 816 / NCTC 3887 / NRRL 1 / QM 1276 / 107)).